We begin with the raw amino-acid sequence, 448 residues long: Probable sodium-coupled neutral amino acid transporter 6 (448 aa).

Composition is skewed to polar residues over residues 1–12 and 26–36; these read MQASDSSINTLD and LLANSPQRRSS. The interval 1–36 is disordered; that stretch reads MQASDSSINTLDGHQVSAGRDESTPLLANSPQRRSS. Transmembrane regions (helical) follow at residues 40–60, 69–89, 117–137, 164–184, and 185–205; these read SFGF…ILGL, ILGF…SIHL, LVAC…LFII, LLII…KIGF, and LGYT…VIVI. Cysteines 212 and 232 form a disulfide. Asn218 and Asn228 each carry an N-linked (GlcNAc...) asparagine glycan. The next 6 membrane-spanning stretches (helical) occupy residues 244–264, 281–301, 321–341, 365–385, 388–408, and 425–445; these read AFAL…LPIY, VGIA…YLTF, VLII…VPLI, ILVT…VPDM, VFGV…PGLF, and ACGL…LIIM.

It belongs to the amino acid/polyamine transporter 2 family.

Its subcellular location is the cell membrane. Probable sodium-dependent amino acid/proton antiporter, could be a neuronal transporter for glutamate. The sequence is that of Probable sodium-coupled neutral amino acid transporter 6 (slc38a6) from Xenopus tropicalis (Western clawed frog).